A 276-amino-acid polypeptide reads, in one-letter code: MAGENPTASEYIQHHLQNLTFGNHPEHGWSFAHTAQEAKEMGFWAVHVDSLGWSIALGALFVWLFRKAAVKATSGVPSGLQNFVEIMVDFVDKSVKETFHGKNAVIAPLALTVFCWIFLMNLMDLVPVDFLPRLFQVITGDDHAYFKVVPTTDVNVTLGMSLSVFFLIIYYSIKVKGVGGFLGELTLQPFGKWMLPFNLLLEGVGLIAKPISLALRLFGNLYAGELLFILIALMPFWAQWALSVPWAIFHILVIVLQAFIFMMLTIVYLSMAHEDH.

A run of 5 helical transmembrane segments spans residues 45–65 (AVHV…VWLF), 105–125 (VIAP…LMDL), 154–173 (VNVT…YYSI), 226–246 (LLFI…SVPW), and 247–267 (AIFH…LTIV).

It belongs to the ATPase A chain family. In terms of assembly, F-type ATPases have 2 components, CF(1) - the catalytic core - and CF(0) - the membrane proton channel. CF(1) has five subunits: alpha(3), beta(3), gamma(1), delta(1), epsilon(1). CF(0) has three main subunits: a(1), b(2) and c(9-12). The alpha and beta chains form an alternating ring which encloses part of the gamma chain. CF(1) is attached to CF(0) by a central stalk formed by the gamma and epsilon chains, while a peripheral stalk is formed by the delta and b chains.

The protein localises to the cell inner membrane. Functionally, key component of the proton channel; it plays a direct role in the translocation of protons across the membrane. The chain is ATP synthase subunit a 2 from Hahella chejuensis (strain KCTC 2396).